The following is a 294-amino-acid chain: MGLVKVIKNKAYFKRYQVKLKRRREGKTDYYARKRLTVQDKNKYNTPKYRLIVRLTNKDIVAQLAYSKIEGDVVVASAYAHELPRYGLKAGLTNYAAAYATGLLLARRHLKAIGLDSTYKGHEELTGEDYNVEEEGDRAPFKAVLDIGLARTTTGSKIFAVMKGVADGGINVPHSESRFFGFDQESKDYNAEAHRDRILGKHVADYMSLLKEEDEDRYKRQFSKFLSNGMNADNLVATYQKAHANIRADPSPSAKKAAKPSKRHTAKRLTYDERKQRVADKKALLLQLKEQQQE.

The tract at residues Arg247–Lys275 is disordered. The segment covering Lys256–Lys267 has biased composition (basic residues).

It belongs to the universal ribosomal protein uL18 family. Component of the large ribosomal subunit (LSU).

The protein resides in the cytoplasm. Its subcellular location is the nucleus. In terms of biological role, component of the ribosome, a large ribonucleoprotein complex responsible for the synthesis of proteins in the cell. The small ribosomal subunit (SSU) binds messenger RNAs (mRNAs) and translates the encoded message by selecting cognate aminoacyl-transfer RNA (tRNA) molecules. The large subunit (LSU) contains the ribosomal catalytic site termed the peptidyl transferase center (PTC), which catalyzes the formation of peptide bonds, thereby polymerizing the amino acids delivered by tRNAs into a polypeptide chain. The nascent polypeptides leave the ribosome through a tunnel in the LSU and interact with protein factors that function in enzymatic processing, targeting, and the membrane insertion of nascent chains at the exit of the ribosomal tunnel. This is Large ribosomal subunit protein uL18 (rpl-5) from Caenorhabditis briggsae.